The following is an 810-amino-acid chain: Phenylalanine--tRNA ligase beta subunit (810 aa).

Residues 39–154 (APPTEKIVVG…EGTPVGQDIR (116 aa)) form the tRNA-binding domain. A B5 domain is found at 405-480 (PQRAPVSMRA…RIYGFEKIPA (76 aa)). 4 residues coordinate Mg(2+): D458, D464, E467, and E468. In terms of domain architecture, FDX-ACB spans 707–809 (SKFPPVRRDI…MARVYGARLR (103 aa)).

The protein belongs to the phenylalanyl-tRNA synthetase beta subunit family. Type 1 subfamily. In terms of assembly, tetramer of two alpha and two beta subunits. The cofactor is Mg(2+).

Its subcellular location is the cytoplasm. The catalysed reaction is tRNA(Phe) + L-phenylalanine + ATP = L-phenylalanyl-tRNA(Phe) + AMP + diphosphate + H(+). This Burkholderia mallei (strain ATCC 23344) protein is Phenylalanine--tRNA ligase beta subunit.